A 325-amino-acid polypeptide reads, in one-letter code: uncharacterized protein (325 aa).

The N-terminal 69 residues, 1–69 (MAMMTTTTTT…KNRRVSVTVS (69 aa)), are a transit peptide targeting the chloroplast. Ala70 bears the N-acetylalanine mark.

This sequence belongs to the NAD(P)-dependent epimerase/dehydratase family.

It localises to the plastid. The protein localises to the chloroplast. This is an uncharacterized protein from Arabidopsis thaliana (Mouse-ear cress).